A 241-amino-acid polypeptide reads, in one-letter code: Uridylate kinase (241 aa).

An ATP-binding site is contributed by K12–G15. UMP is bound at residue G54. Residues G55 and R59 each coordinate ATP. UMP-binding positions include D74 and T135–T142. Residues T162, Y168, and D171 each contribute to the ATP site.

The protein belongs to the UMP kinase family. Homohexamer.

Its subcellular location is the cytoplasm. The catalysed reaction is UMP + ATP = UDP + ADP. The protein operates within pyrimidine metabolism; CTP biosynthesis via de novo pathway; UDP from UMP (UMPK route): step 1/1. With respect to regulation, inhibited by UTP. Functionally, catalyzes the reversible phosphorylation of UMP to UDP. The sequence is that of Uridylate kinase from Magnetococcus marinus (strain ATCC BAA-1437 / JCM 17883 / MC-1).